The primary structure comprises 168 residues: Protein-export protein SecB (168 aa).

It belongs to the SecB family. In terms of assembly, homotetramer, a dimer of dimers. One homotetramer interacts with 1 SecA dimer.

It localises to the cytoplasm. Its function is as follows. One of the proteins required for the normal export of preproteins out of the cell cytoplasm. It is a molecular chaperone that binds to a subset of precursor proteins, maintaining them in a translocation-competent state. It also specifically binds to its receptor SecA. This Sinorhizobium medicae (strain WSM419) (Ensifer medicae) protein is Protein-export protein SecB.